The chain runs to 332 residues: Ribose-phosphate pyrophosphokinase (332 aa).

Residues 43-45 (DGE) and 102-103 (RQ) contribute to the ATP site. Mg(2+) is bound by residues His-136 and Asp-176. Lys-199 is a catalytic residue. D-ribose 5-phosphate-binding positions include Arg-201, Asp-225, and 229–233 (DTGGT).

It belongs to the ribose-phosphate pyrophosphokinase family. Class I subfamily. As to quaternary structure, homohexamer. Mg(2+) is required as a cofactor.

The protein resides in the cytoplasm. It carries out the reaction D-ribose 5-phosphate + ATP = 5-phospho-alpha-D-ribose 1-diphosphate + AMP + H(+). It participates in metabolic intermediate biosynthesis; 5-phospho-alpha-D-ribose 1-diphosphate biosynthesis; 5-phospho-alpha-D-ribose 1-diphosphate from D-ribose 5-phosphate (route I): step 1/1. In terms of biological role, involved in the biosynthesis of the central metabolite phospho-alpha-D-ribosyl-1-pyrophosphate (PRPP) via the transfer of pyrophosphoryl group from ATP to 1-hydroxyl of ribose-5-phosphate (Rib-5-P). The sequence is that of Ribose-phosphate pyrophosphokinase from Mycoplasma genitalium (strain ATCC 33530 / DSM 19775 / NCTC 10195 / G37) (Mycoplasmoides genitalium).